The primary structure comprises 184 residues: UPF0149 protein PSEEN5316 (184 aa).

Belongs to the UPF0149 family.

The polypeptide is UPF0149 protein PSEEN5316 (Pseudomonas entomophila (strain L48)).